The primary structure comprises 317 residues: Gamma-glutamyl hydrolase (317 aa).

A signal peptide spans 1 to 24; it reads MANLGYLLCLLGLLLCGLSSPGMS. The Gamma-glutamyl hydrolase domain occupies 25–317; the sequence is RPYNHGSERP…SSFQQAYMFD (293 aa). N-linked (GlcNAc...) (high mannose) asparagine glycosylation occurs at N100. The Nucleophile role is filled by C133. 2 N-linked (GlcNAc...) (high mannose) asparagine glycosylation sites follow: N162 and N188. N-linked (GlcNAc...) asparagine glycosylation occurs at N202. H243 acts as the Proton donor in catalysis. N-linked (GlcNAc...) asparagine glycosylation occurs at N306.

This sequence belongs to the peptidase C26 family. Homodimer. Isoform I (more expressed than isoform II in all tissues) is highly expressed in salivary gland, followed by kidney, liver, lung, stomach and uterus, and weakly expressed in small intestine, brain and fetal liver. Also expressed at a lower level in thymus, spleen and skeletal muscle. Also expressed in tumors.

The protein resides in the secreted. It is found in the extracellular space. Its subcellular location is the lysosome. It localises to the melanosome. It catalyses the reaction (6S)-5,6,7,8-tetrahydrofolyl-(gamma-L-Glu)(n) + (n-1) H2O = (6S)-5,6,7,8-tetrahydrofolate + (n-1) L-glutamate. Functionally, hydrolyzes the polyglutamate sidechains of pteroylpolyglutamates. Progressively removes gamma-glutamyl residues from pteroylpoly-gamma-glutamate to yield pteroyl-alpha-glutamate (folic acid) and free glutamate. May play an important role in the bioavailability of dietary pteroylpolyglutamates and in the metabolism of pteroylpolyglutamates and antifolates. This Mus musculus (Mouse) protein is Gamma-glutamyl hydrolase (Ggh).